The chain runs to 104 residues: MTVKWIEAVALSDILEGDVLGVTVEGKELALYEVEGEIYATDNLCTHGSARMSDGYLEGREIECPLHQGRFDVCTGKALCAPVTQNIKTYPVKIENLRVMIDLS.

In terms of domain architecture, Rieske spans 6–101; it reads IEAVALSDIL…VKIENLRVMI (96 aa). The [2Fe-2S] cluster site is built by Cys-45, His-47, Cys-64, and His-67.

It belongs to the bacterial ring-hydroxylating dioxygenase ferredoxin component family. The naphthalene dioxygenase (NDO) multicomponent enzyme system is composed of an electron transfer component and a dioxygenase component (iron sulfur protein (ISP)). The electron transfer component is composed of a ferredoxin reductase (NdoR) and a ferredoxin (NdoA), and the dioxygenase component is formed of a heterohexamer (trimer of heterodimers) of three large alpha subunits (NdoB) and three small beta subunits (NdoC). [2Fe-2S] cluster serves as cofactor.

It participates in aromatic compound metabolism; naphthalene degradation. Its function is as follows. Component of the naphthalene dioxygenase (NDO) multicomponent enzyme system which catalyzes the incorporation of both atoms of molecular oxygen into naphthalene to form cis-(1R,2S)-dihydroxy-1,2-dihydronaphthalene. Functions as an intermediate electron transfer protein via a specific interaction with iron sulfur protein components (ISP) (NdoB and NdoC). Also able to catalyze the cis-dihydroxylation of biphenyl and phenanthrene. This chain is Naphthalene 1,2-dioxygenase system, ferredoxin component, found in Pseudomonas putida (Arthrobacter siderocapsulatus).